A 124-amino-acid chain; its full sequence is Large ribosomal subunit protein bL12 (124 aa).

The protein belongs to the bacterial ribosomal protein bL12 family. Homodimer. Part of the ribosomal stalk of the 50S ribosomal subunit. Forms a multimeric L10(L12)X complex, where L10 forms an elongated spine to which 2 to 4 L12 dimers bind in a sequential fashion. Binds GTP-bound translation factors.

In terms of biological role, forms part of the ribosomal stalk which helps the ribosome interact with GTP-bound translation factors. Is thus essential for accurate translation. This chain is Large ribosomal subunit protein bL12, found in Cupriavidus necator (strain ATCC 17699 / DSM 428 / KCTC 22496 / NCIMB 10442 / H16 / Stanier 337) (Ralstonia eutropha).